Reading from the N-terminus, the 464-residue chain is Forkhead box protein N3 (464 aa).

Disordered regions lie at residues 1 to 53 (MGPI…EKGG) and 85 to 108 (PVQD…DAKQ). The segment covering 14-30 (TGISVSSQCYRSSTLSN) has biased composition (polar residues). Residues 113–209 (KPPYSFSCLI…QALKKTPYHP (97 aa)) constitute a DNA-binding region (fork-head). 2 disordered regions span residues 294 to 337 (MESE…SSSA) and 381 to 428 (LVES…MKEA). A compositionally biased stretch (low complexity) spans 316–336 (SSAKSANKRSSSPSDSISSSS). The span at 389–401 (QHKKKQHLLKLRR) shows a compositional bias: basic residues.

It is found in the nucleus. Its function is as follows. Acts as a transcriptional repressor. May be involved in DNA damage-inducible cell cycle arrests (checkpoints). This is Forkhead box protein N3 from Xenopus tropicalis (Western clawed frog).